A 558-amino-acid polypeptide reads, in one-letter code: Inositol-3-phosphate synthase 1 (558 aa).

The NAD(+) site is built by glycine 67, glycine 68, asparagine 69, asparagine 70, aspartate 141, serine 177, valine 178, glutamine 188, arginine 191, threonine 228, alanine 229, asparagine 230, threonine 231, glycine 278, serine 279, aspartate 303, serine 306, asparagine 337, asparagine 338, aspartate 339, and lysine 352. A Phosphoserine modification is found at serine 279. Serine 357 bears the Phosphoserine mark. NAD(+)-binding residues include glycine 390, aspartate 391, aspartate 419, and serine 420. A disordered region spans residues 537–558 (ATNGCTGDANGHLQEEPPMPTT).

The protein belongs to the myo-inositol 1-phosphate synthase family. The cofactor is NAD(+). In terms of processing, phosphorylation at Ser-279 and Ser-357 may be associated with a decrease in activity. In terms of tissue distribution, highly expressed in testis, ovary, heart, placenta and pancreas. Weakly expressed in blood leukocyte, thymus, skeletal muscle and colon.

It is found in the cytoplasm. It catalyses the reaction D-glucose 6-phosphate = 1D-myo-inositol 3-phosphate. It functions in the pathway polyol metabolism; myo-inositol biosynthesis; myo-inositol from D-glucose 6-phosphate: step 1/2. Inhibited by mood-stabilizing drugs such as valproate (VPA) and lithium. Key enzyme in myo-inositol biosynthesis pathway that catalyzes the conversion of glucose 6-phosphate to 1-myo-inositol 1-phosphate in a NAD-dependent manner. Rate-limiting enzyme in the synthesis of all inositol-containing compounds. In Homo sapiens (Human), this protein is Inositol-3-phosphate synthase 1 (ISYNA1).